The primary structure comprises 479 residues: MLPRHHEPIAAIATAPGRGAVGIVRVSGRGLTALATALVGRPLRPRVASYGPFLDRQGGAIDRGLALHFPAPHSYTGEDVLELQAHGGPVVLQLLLARCLEAAGEIGTDGRPRLPGLRLAQPGEFTERAYLNDKLDLAQAEAVADLIDASTEAAARSAARSLSGDFSRQITHLRDGLIELRALVEATLDFPEEEIDFLQRADAHGRLARLAERLAGLLDTARQGALLREGLRVVIAGQPNAGKSSLLNALAGAELAIVTPIPGTTRDKISETIQIEGVPVHVIDTAGLRSDEQAGDEVERIGISRSWQAIAEADAVLLLHDLTREHEPAYSAADTAIAQRLPADVGLIHVHNKADAAPEQAARVAARLAARQAGDAAGVVLSARTHDGIDALRAALLARAGWHAAPEGVFIARERHVRALRAAATHVTAAQGWAEQSDSALDLLAEELRSAHDALAEITGSYSSDDLLGDIFGRFCIGK.

Residues Arg25, Glu82, and Lys134 each contribute to the (6S)-5-formyl-5,6,7,8-tetrahydrofolate site. The 172-residue stretch at 230–401 (GLRVVIAGQP…LRAALLARAG (172 aa)) folds into the TrmE-type G domain. Position 240 (Asn240) interacts with K(+). GTP is bound by residues 240–245 (NAGKSS), 259–265 (TPIPGTT), 284–287 (DTAG), 352–355 (NKAD), and 382–384 (SAR). Ser244 lines the Mg(2+) pocket. Residues Thr259, Ile261, and Thr264 each coordinate K(+). A Mg(2+)-binding site is contributed by Thr265. Residue Lys479 participates in (6S)-5-formyl-5,6,7,8-tetrahydrofolate binding.

This sequence belongs to the TRAFAC class TrmE-Era-EngA-EngB-Septin-like GTPase superfamily. TrmE GTPase family. As to quaternary structure, homodimer. Heterotetramer of two MnmE and two MnmG subunits. K(+) is required as a cofactor.

The protein localises to the cytoplasm. Functionally, exhibits a very high intrinsic GTPase hydrolysis rate. Involved in the addition of a carboxymethylaminomethyl (cmnm) group at the wobble position (U34) of certain tRNAs, forming tRNA-cmnm(5)s(2)U34. In Leptothrix cholodnii (strain ATCC 51168 / LMG 8142 / SP-6) (Leptothrix discophora (strain SP-6)), this protein is tRNA modification GTPase MnmE.